A 294-amino-acid polypeptide reads, in one-letter code: Acetylglutamate kinase (294 aa).

Residues 63-64 (GG), Arg85, and Asn188 contribute to the substrate site.

The protein belongs to the acetylglutamate kinase family. ArgB subfamily.

Its subcellular location is the cytoplasm. It carries out the reaction N-acetyl-L-glutamate + ATP = N-acetyl-L-glutamyl 5-phosphate + ADP. The protein operates within amino-acid biosynthesis; L-arginine biosynthesis; N(2)-acetyl-L-ornithine from L-glutamate: step 2/4. Its function is as follows. Catalyzes the ATP-dependent phosphorylation of N-acetyl-L-glutamate. The protein is Acetylglutamate kinase of Methanococcus maripaludis (strain C6 / ATCC BAA-1332).